Reading from the N-terminus, the 66-residue chain is Large ribosomal subunit protein bL35 (66 aa).

The tract at residues 1 to 42 is disordered; that stretch reads MPKQKTHRASAKRFKRTANGGLKRHHAYTGHRFHGKTKKQRR.

The protein belongs to the bacterial ribosomal protein bL35 family.

The polypeptide is Large ribosomal subunit protein bL35 (Lactobacillus gasseri (strain ATCC 33323 / DSM 20243 / BCRC 14619 / CIP 102991 / JCM 1131 / KCTC 3163 / NCIMB 11718 / NCTC 13722 / AM63)).